The sequence spans 511 residues: Lysine--tRNA ligase (511 aa).

Residues glutamate 403 and glutamate 410 each coordinate Mg(2+).

The protein belongs to the class-II aminoacyl-tRNA synthetase family. In terms of assembly, homodimer. Requires Mg(2+) as cofactor.

The protein localises to the cytoplasm. The catalysed reaction is tRNA(Lys) + L-lysine + ATP = L-lysyl-tRNA(Lys) + AMP + diphosphate. This is Lysine--tRNA ligase from Onion yellows phytoplasma (strain OY-M).